The primary structure comprises 1143 residues: Disease resistance protein Piks-1 (1143 aa).

Residues 1–190 are structured coiled coil (CC) domain; that stretch reads MEAAAMAVTA…PLRIMGGEMQ (190 aa). An HMA domain is found at 189–258; the sequence is MQKIVFKIPM…KVGPAMFLEV (70 aa). The segment at 191–264 is HMA-like domain; sequence KIVFKIPMVD…FLEVSQAKED (74 aa). The NB-ARC domain occupies 282-570; sequence HEVKTICILG…WIAEGFVSEE (289 aa). LRR repeat units lie at residues 681–706, 708–731, 732–754, 756–777, 778–800, 802–823, 824–848, 945–968, 979–1002, and 1004–1027; these read FKRL…ICEQ, SLRV…MRKL, KHLE…IGEL, HLRI…IREL, QHLH…VGKL, NLKI…IGEL, NHLQ…QISQ, MPNL…INGT, DSRV…EFKF, and AGPA…VFRC.

Belongs to the disease resistance NB-LRR family. As to quaternary structure, interacts with AVR-Pik through its N-terminal part containing the HMA-like domain.

Functionally, disease resistance (R) protein that specifically recognizes the AVR-Pik effector avirulence protein from M.oryzae. Resistance proteins guard the plant against pathogens that contain an appropriate avirulence protein via an indirect interaction with this avirulence protein. That triggers a defense system including the hypersensitive response, which restricts the pathogen growth. The protein is Disease resistance protein Piks-1 of Oryza sativa subsp. japonica (Rice).